Consider the following 63-residue polypeptide: Large ribosomal subunit protein bL35 (63 aa).

This sequence belongs to the bacterial ribosomal protein bL35 family.

The protein is Large ribosomal subunit protein bL35 of Sulfurovum sp. (strain NBC37-1).